A 709-amino-acid chain; its full sequence is Acyl-coenzyme A oxidase 4 (709 aa).

Over residues 1 to 12 the composition is skewed to polar residues; the sequence is MTFTKKNVSVSQ. The segment at 1–29 is disordered; that stretch reads MTFTKKNVSVSQGPDPRSSIQKERDSSKW.

The protein belongs to the acyl-CoA oxidase family. As to quaternary structure, homooctamer. The cofactor is FAD.

The protein localises to the peroxisome. The catalysed reaction is a 2,3-saturated acyl-CoA + O2 = a (2E)-enoyl-CoA + H2O2. The protein operates within lipid metabolism; peroxisomal fatty acid beta-oxidation. The polypeptide is Acyl-coenzyme A oxidase 4 (POX4) (Candida tropicalis (Yeast)).